A 442-amino-acid polypeptide reads, in one-letter code: Cell division protein FtsA (442 aa).

It belongs to the FtsA/MreB family. Self-interacts. Interacts with FtsZ.

It is found in the cell inner membrane. In terms of biological role, cell division protein that is involved in the assembly of the Z ring. May serve as a membrane anchor for the Z ring. This is Cell division protein FtsA from Rhizobium meliloti (strain 1021) (Ensifer meliloti).